The chain runs to 268 residues: Ribosomal RNA small subunit methyltransferase A (268 aa).

S-adenosyl-L-methionine contacts are provided by Asn-16, Leu-18, Gly-43, Glu-64, Asp-89, and Asn-110.

Belongs to the class I-like SAM-binding methyltransferase superfamily. rRNA adenine N(6)-methyltransferase family. RsmA subfamily.

It localises to the cytoplasm. It catalyses the reaction adenosine(1518)/adenosine(1519) in 16S rRNA + 4 S-adenosyl-L-methionine = N(6)-dimethyladenosine(1518)/N(6)-dimethyladenosine(1519) in 16S rRNA + 4 S-adenosyl-L-homocysteine + 4 H(+). Specifically dimethylates two adjacent adenosines (A1518 and A1519) in the loop of a conserved hairpin near the 3'-end of 16S rRNA in the 30S particle. May play a critical role in biogenesis of 30S subunits. The polypeptide is Ribosomal RNA small subunit methyltransferase A (Pseudomonas syringae pv. tomato (strain ATCC BAA-871 / DC3000)).